We begin with the raw amino-acid sequence, 69 residues long: MLKTGVLLLIFLVLFPLATLQDADQPVERNVENKQDLNLDKRRGMKLLAQRQQECCDPDWCDGACYNCC.

An N-terminal signal peptide occupies residues methionine 1–leucine 20. A propeptide spanning residues glutamine 21–arginine 51 is cleaved from the precursor. A Pyrrolidone carboxylic acid modification is found at glutamine 52. A 4-carboxyglutamate modification is found at glutamate 54. Proline 58 is subject to 4-hydroxyproline.

This sequence belongs to the conotoxin M superfamily. Expressed by the venom duct.

The protein localises to the secreted. Probable toxin. This is Conotoxin Fr3.1 from Conus frigidus (Frigid cone).